Consider the following 314-residue polypeptide: Methionyl-tRNA formyltransferase (314 aa).

(6S)-5,6,7,8-tetrahydrofolate is bound at residue 113–116; that stretch reads SLLP.

This sequence belongs to the Fmt family.

It carries out the reaction L-methionyl-tRNA(fMet) + (6R)-10-formyltetrahydrofolate = N-formyl-L-methionyl-tRNA(fMet) + (6S)-5,6,7,8-tetrahydrofolate + H(+). Its function is as follows. Attaches a formyl group to the free amino group of methionyl-tRNA(fMet). The formyl group appears to play a dual role in the initiator identity of N-formylmethionyl-tRNA by promoting its recognition by IF2 and preventing the misappropriation of this tRNA by the elongation apparatus. The chain is Methionyl-tRNA formyltransferase from Serratia proteamaculans (strain 568).